A 285-amino-acid chain; its full sequence is ATP synthase gamma chain (285 aa).

It belongs to the ATPase gamma chain family. F-type ATPases have 2 components, CF(1) - the catalytic core - and CF(0) - the membrane proton channel. CF(1) has five subunits: alpha(3), beta(3), gamma(1), delta(1), epsilon(1). CF(0) has three main subunits: a, b and c.

It localises to the cell membrane. Produces ATP from ADP in the presence of a proton gradient across the membrane. The gamma chain is believed to be important in regulating ATPase activity and the flow of protons through the CF(0) complex. The polypeptide is ATP synthase gamma chain (Dehalococcoides mccartyi (strain ATCC BAA-2100 / JCM 16839 / KCTC 5957 / BAV1)).